A 138-amino-acid polypeptide reads, in one-letter code: Large-conductance mechanosensitive channel (138 aa).

A run of 3 helical transmembrane segments spans residues 15–35, 38–58, and 80–100; these read VDLA…NSVV, IFMP…MFIQ, and GNFI…FFLV.

The protein belongs to the MscL family. Homopentamer.

Its subcellular location is the cell inner membrane. In terms of biological role, channel that opens in response to stretch forces in the membrane lipid bilayer. May participate in the regulation of osmotic pressure changes within the cell. This chain is Large-conductance mechanosensitive channel, found in Bartonella bacilliformis (strain ATCC 35685 / KC583 / Herrer 020/F12,63).